A 1140-amino-acid chain; its full sequence is Eukaryotic translation initiation factor 3 subunit A (1140 aa).

The 184-residue stretch at 319–502 (LQRMAAHVLL…HCIYFGTDLT (184 aa)) folds into the PCI domain. 6 stretches are compositionally biased toward basic and acidic residues: residues 590–624 (NNAR…EERE), 826–903 (RMAQ…RPEG), 925–965 (DRAD…KDNE), 1000–1019 (SRDD…DFRN), 1026–1053 (RGGD…EQQR), and 1061–1087 (DAPR…RDVR). Disordered stretches follow at residues 590–632 (NNAR…QNEI) and 826–1140 (RMAQ…VKRR). Over residues 1091–1101 (PKEGGGGGGGN) the composition is skewed to gly residues. Residues 1108–1130 (PRDEKPTTKQRDQPQDKENKAGD) are compositionally biased toward basic and acidic residues.

Belongs to the eIF-3 subunit A family. As to quaternary structure, component of the eukaryotic translation initiation factor 3 (eIF-3) complex. The eIF-3 complex interacts with pix.

It localises to the cytoplasm. RNA-binding component of the eukaryotic translation initiation factor 3 (eIF-3) complex, which is involved in protein synthesis of a specialized repertoire of mRNAs and, together with other initiation factors, stimulates binding of mRNA and methionyl-tRNAi to the 40S ribosome. The eIF-3 complex specifically targets and initiates translation of a subset of mRNAs involved in cell proliferation. The polypeptide is Eukaryotic translation initiation factor 3 subunit A (Drosophila willistoni (Fruit fly)).